The primary structure comprises 699 residues: Elongation factor G (699 aa).

The tr-type G domain occupies 8 to 287 (EKLRNIGIVA…AVIDYLPSPI (280 aa)). Residues 17-24 (AHIDAGKT), 85-89 (DTPGH), and 139-142 (NKMD) each bind GTP.

The protein belongs to the TRAFAC class translation factor GTPase superfamily. Classic translation factor GTPase family. EF-G/EF-2 subfamily.

The protein localises to the cytoplasm. Its function is as follows. Catalyzes the GTP-dependent ribosomal translocation step during translation elongation. During this step, the ribosome changes from the pre-translocational (PRE) to the post-translocational (POST) state as the newly formed A-site-bound peptidyl-tRNA and P-site-bound deacylated tRNA move to the P and E sites, respectively. Catalyzes the coordinated movement of the two tRNA molecules, the mRNA and conformational changes in the ribosome. In Aquifex aeolicus (strain VF5), this protein is Elongation factor G (fusA).